The primary structure comprises 468 residues: Glutamate--tRNA ligase (468 aa).

L-glutamate is bound at residue 5-7 (RIA). The short motif at 8–18 (PSPTGDPHVGT) is the 'HIGH' region element. Histidine 15 serves as a coordination point for ATP. L-glutamate-binding positions include glutamate 41, 187–191 (YHLAN), and arginine 205. ATP-binding positions include glutamate 208, leucine 236, 243–247 (KISKR), and lysine 246. Residues 243-247 (KISKR) carry the 'KMSKS' region motif. The interaction with tRNA stretch occupies residues 432–447 (QPLRAALTGSLETPGL).

This sequence belongs to the class-I aminoacyl-tRNA synthetase family. Glutamate--tRNA ligase type 1 subfamily. As to quaternary structure, monomer.

The protein localises to the cytoplasm. It catalyses the reaction tRNA(Glu) + L-glutamate + ATP = L-glutamyl-tRNA(Glu) + AMP + diphosphate. With respect to regulation, in the absence of bound tRNA, ATP is bound in a non-productive mode, and the enzyme cannot activate amino acids. In terms of biological role, catalyzes the attachment of glutamate to tRNA(Glu) in a two-step reaction: glutamate is first activated by ATP to form Glu-AMP and then transferred to the acceptor end of tRNA(Glu). This is Glutamate--tRNA ligase from Thermus thermophilus (strain ATCC 27634 / DSM 579 / HB8).